Reading from the N-terminus, the 180-residue chain is uncharacterized protein (180 aa).

Positions 114–136 (DKISESDSLPDEYKEYVVKHDSD) are enriched in basic and acidic residues. Positions 114 to 180 (DKISESDSLP…NFDNPDDNPK (67 aa)) are disordered. Residues 137–146 (NSDNDSDNSD) are compositionally biased toward acidic residues. Low complexity predominate over residues 147–173 (NDSNNSDNDSNNSDSDSDNSNDPNNFD).

This is an uncharacterized protein from Acanthamoeba polyphaga (Amoeba).